We begin with the raw amino-acid sequence, 501 residues long: Carotenoid cleavage oxygenase (501 aa).

Residues histidine 162, histidine 211, histidine 314, and histidine 494 each coordinate Fe cation.

The protein belongs to the carotenoid oxygenase family. Fe(2+) is required as a cofactor.

Functionally, catalyzes the oxidative cleavage of several carotenoids and apocarotenoids in vitro. This Mycobacterium tuberculosis (strain CDC 1551 / Oshkosh) protein is Carotenoid cleavage oxygenase.